Consider the following 551-residue polypeptide: Chitinase (551 aa).

The first 17 residues, 1 to 17 (MLYKLLNVLWLVAVSNA), serve as a signal peptide directing secretion. Positions 1–149 (MLYKLLNVLW…NKPGRREDKI (149 aa)) are chitin binding domain (CBD). Residues 148–548 (KIVAAYFVEW…NAINAQFKPK (401 aa)) enclose the GH18 domain. Residue Asn173 is glycosylated (N-linked (GlcNAc...) asparagine; by host). The active-site Proton donor is the Glu305. Asn444 is a glycosylation site (N-linked (GlcNAc...) asparagine; by host). The short motif at 548 to 551 (KDEL) is the Prevents secretion from ER element.

Belongs to the glycosyl hydrolase 18 family. Chitinase class II subfamily. In terms of assembly, interacts with host VCATH.

The protein resides in the host endoplasmic reticulum lumen. The enzyme catalyses Random endo-hydrolysis of N-acetyl-beta-D-glucosaminide (1-&gt;4)-beta-linkages in chitin and chitodextrins.. Functionally, plays a role in host liquefaction to facilitate horizontal transmission of the virus by hydrolyzing beta-chitin and by regulating the cysteine protease VCATH. Localized in the host reticulum endoplasmic via its KDEL motif, interacts with and thus prevents VCATH secretion before host cell lysis occurs. The sequence is that of Chitinase (CHIA) from Lepidoptera (butterflies and moths).